An 803-amino-acid chain; its full sequence is Spondin-1 (803 aa).

The signal sequence occupies residues 1–23; that stretch reads MGLIFQPLFWQYVATSYALMVLG. In terms of domain architecture, Reelin spans 24-190; sequence FLDETVEKAI…DLTLEGGNEK (167 aa). 14 cysteine pairs are disulfide-bonded: C39-C124, C152-C178, C195-C331, C196-C335, C198-C409, C437-C474, C448-C483, C453-C488, C496-C532, C507-C511, C542-C548, C553-C589, C564-C568, and C599-C604. Residues 191–383 form the Spondin domain; the sequence is TIPDCCACGT…LTSLDHPQSP (193 aa). N-linked (GlcNAc...) asparagine glycosylation is present at N210. Ca(2+) is bound by residues D320, D349, and D353. The tract at residues 353-389 is disordered; that stretch reads DSGVTYESPNKPTIPQDKIRPLTSLDHPQSPSMTRGG. Positions 354–365 are enriched in polar residues; it reads SGVTYESPNKPT. TSP type-1 domains are found at residues 436 to 489, 495 to 549, 552 to 605, 608 to 662, and 664 to 717; these read TCIY…PGCS, TCMM…EECE, SCIV…PECH, PCVL…PECP, and SCEL…RKCQ. An N-linked (GlcNAc...) asparagine glycan is attached at N677. Residues 722–741 are disordered; the sequence is NERRHLKDAREKRRSEKIKE. In terms of domain architecture, TSP type-1 6 spans 750–802; that stretch reads VCKMKPWTAWTECTKFCGGGIQERFMTVKKRFKSSQFTSCKDKKEIRACNVHP.

As to expression, expressed at high levels in the floor plate.

The protein resides in the secreted. Its subcellular location is the extracellular space. It localises to the extracellular matrix. Functionally, promotes the attachment of spinal cord and sensory neuron cells and the outgrowth of neurites in vitro. May contribute to the growth and guidance of axons in both the spinal cord and the PNS. The polypeptide is Spondin-1 (spon1) (Xenopus laevis (African clawed frog)).